The following is a 234-amino-acid chain: Ribulose-phosphate 3-epimerase (234 aa).

Substrate is bound at residue S7. Residues H32, D34, and H65 each contribute to the a divalent metal cation site. D34 (proton acceptor) is an active-site residue. Substrate is bound by residues H65, 139–142 (GFSG), 172–174 (DGG), and 194–195 (AS). D172 is a binding site for a divalent metal cation. D172 functions as the Proton donor in the catalytic mechanism.

This sequence belongs to the ribulose-phosphate 3-epimerase family. Requires a divalent metal cation as cofactor.

It carries out the reaction D-ribulose 5-phosphate = D-xylulose 5-phosphate. It functions in the pathway carbohydrate degradation. Catalyzes the reversible epimerization of D-ribulose 5-phosphate to D-xylulose 5-phosphate. This chain is Ribulose-phosphate 3-epimerase, found in Methanocaldococcus jannaschii (strain ATCC 43067 / DSM 2661 / JAL-1 / JCM 10045 / NBRC 100440) (Methanococcus jannaschii).